Consider the following 240-residue polypeptide: Ribonuclease HII (240 aa).

Residues 21–210 (GLVAGVDEAG…VAAAVQRTVV (190 aa)) form the RNase H type-2 domain. 3 residues coordinate a divalent metal cation: Asp-27, Glu-28, and Asp-119.

It belongs to the RNase HII family. Mn(2+) serves as cofactor. It depends on Mg(2+) as a cofactor.

The protein localises to the cytoplasm. The catalysed reaction is Endonucleolytic cleavage to 5'-phosphomonoester.. Its function is as follows. Endonuclease that specifically degrades the RNA of RNA-DNA hybrids. This chain is Ribonuclease HII, found in Paracidovorax citrulli (strain AAC00-1) (Acidovorax citrulli).